The sequence spans 175 residues: 3-hydroxydecanoyl-[acyl-carrier-protein] dehydratase (175 aa).

His-74 is a catalytic residue.

Belongs to the thioester dehydratase family. FabA subfamily. Homodimer.

It localises to the cytoplasm. The catalysed reaction is a (3R)-hydroxyacyl-[ACP] = a (2E)-enoyl-[ACP] + H2O. The enzyme catalyses (3R)-hydroxydecanoyl-[ACP] = (2E)-decenoyl-[ACP] + H2O. It carries out the reaction (2E)-decenoyl-[ACP] = (3Z)-decenoyl-[ACP]. It participates in lipid metabolism; fatty acid biosynthesis. Functionally, necessary for the introduction of cis unsaturation into fatty acids. Catalyzes the dehydration of (3R)-3-hydroxydecanoyl-ACP to E-(2)-decenoyl-ACP and then its isomerization to Z-(3)-decenoyl-ACP. Can catalyze the dehydratase reaction for beta-hydroxyacyl-ACPs with saturated chain lengths up to 16:0, being most active on intermediate chain length. In Alcanivorax borkumensis (strain ATCC 700651 / DSM 11573 / NCIMB 13689 / SK2), this protein is 3-hydroxydecanoyl-[acyl-carrier-protein] dehydratase.